The chain runs to 163 residues: Protein NAG1 (163 aa).

Residues 76-96 traverse the membrane as a helical segment; it reads ACFSVRIVLPLSLTISISALM.

Its subcellular location is the membrane. Its function is as follows. Involved in yeast cell wall biogenesis. In Saccharomyces cerevisiae (strain ATCC 204508 / S288c) (Baker's yeast), this protein is Protein NAG1 (NAG1).